Here is a 111-residue protein sequence, read N- to C-terminus: WAP four-disulfide core domain protein 12 (111 aa).

Positions 1 to 23 (MGSSSFLVLMVSLTLVTLVAAEG) are cleaved as a signal peptide. Residues 27–74 (GIEKAGVCPADNVRCFKSDPPQCHTDQDCLGERKCCYLHCGFKCVIPV) enclose the WAP domain. Cystine bridges form between Cys34-Cys62, Cys41-Cys66, Cys49-Cys61, and Cys55-Cys70. The segment at 80 to 111 (GGNKDEDVSGPCPEPGWEAKSPGSSSTGCPQK) is disordered. Polar residues predominate over residues 101–111 (PGSSSTGCPQK).

The protein resides in the secreted. Antibacterial protein. Putative acid-stable proteinase inhibitor. The polypeptide is WAP four-disulfide core domain protein 12 (WFDC12) (Chlorocebus aethiops (Green monkey)).